Reading from the N-terminus, the 615-residue chain is DNA mismatch repair protein MutL (615 aa).

The interval 362–397 (HFAEPAVREPVAPRYSPAPASGSRPAAPWPNAQPGY) is disordered. The span at 373-387 (APRYSPAPASGSRPA) shows a compositional bias: low complexity.

It belongs to the DNA mismatch repair MutL/HexB family.

Functionally, this protein is involved in the repair of mismatches in DNA. It is required for dam-dependent methyl-directed DNA mismatch repair. May act as a 'molecular matchmaker', a protein that promotes the formation of a stable complex between two or more DNA-binding proteins in an ATP-dependent manner without itself being part of a final effector complex. The protein is DNA mismatch repair protein MutL of Escherichia coli O81 (strain ED1a).